A 477-amino-acid chain; its full sequence is uncharacterized protein (477 aa).

This is an uncharacterized protein from Aquifex aeolicus (strain VF5).